A 278-amino-acid chain; its full sequence is DegV domain-containing protein YejH (278 aa).

A DegV domain is found at 3-277; it reads IKIVTDSSIT…PGAWAIMIDY (275 aa). 2 residues coordinate hexadecanoate: threonine 60 and serine 92.

Functionally, may bind long-chain fatty acids, such as palmitate, and may play a role in lipid transport or fatty acid metabolism. The protein is DegV domain-containing protein YejH (yejH) of Lactococcus lactis subsp. lactis (strain IL1403) (Streptococcus lactis).